We begin with the raw amino-acid sequence, 958 residues long: MEHQNAVKEALNALYHHPDDTVRVHADRWLQNFQGTLDAWQVADNLLHDSSSNLETLIFCSQTLRSKVQRDFEELPPGAFQKLRQSLTTLLKKFHKGPPKVRTQISIAVAALAVHVPAADWGDGGIISWLRDEMHMHPEYVPGFLELLTVLPEETFNYKIAARPDRRRQFEKELTSQMEAALSILSACLKISELKEQVLEAFASWLRLRHGIPGTVLACHPLVHAALSSLNCDPLSEASVNVISELIHHTASPSSGGISAQTPLIQVIVPQILSLQAHLRDSSKDEEDVKAIGRLFADVGDSYVELIATGSDEPMVIVHALLEVTAHPEFDIASMTFNFWHSLQLMLTKRESYSSLGSEASIEVERNRRLHIFQPAYQSLVSLVGFRVQYPEDYQGLSYEDLKEFKQTRYAVADVLIDAALILGGDTTLKILYMKLLEANAQTGNNFQDWRPAEAILFCIWAISNYVSVVEAEVMPQVMALLQNLPQQAQLLQTACLLVGAYSKWLNAAPASVSILPSIIRILMSGMGTSEDCAAAAALAFRHTCDDCRKNLCGYFEDLFNIYCMAINGGGGYKVSAEDSLNLVEALGMVVTELPLDQAKGALEKLCFSAASPLEEAAKEDLEKKHARELTVHIDRFAFLFRYVNHPEAVAAEINKHWAIFRVIFDARPWDMRTMESLCRACKYAVRTSGRYIIDTIGEMLEKIQFHYQQHHQPCFLYLSSEVIKIFGSDPSCAVYLKNLIETLFAHTTCLMTSIKEVTARPDIADDCFLLASRCLRYCPHLFIPSPIFPALVNCAMIGITVQHREACHSILTFLTDIFDLEKSVNEEQFVRIRDNIIIPRGATITRILIASLAGALPSSRLDTVTYSLLALTRTYRLQAVSWAKESVSLIPRTALTETESTKFLQALSDIAYGADVNSLIGQVEELSDVCRRNRTVQELVQAALKPLELNLVTAPVS.

One can recognise an Importin N-terminal domain in the interval 26-93; sequence ADRWLQNFQG…RQSLTTLLKK (68 aa).

Belongs to the importin beta family. As to quaternary structure, interacts with RS2Z33, RSZ21, RS31A, SR34 and RAN1.

It is found in the nucleus. Functionally, functions as a nuclear import receptor for serine-arginine rich (SR) proteins. Regulates nuclear import of SR proteins that are required for proper splicing of the two resistance (R) genes SNC1 and RPS4, a crucial step for their functions in plant immunity. The polypeptide is Transportin MOS14 (Arabidopsis thaliana (Mouse-ear cress)).